The chain runs to 958 residues: Dermatan-sulfate epimerase (958 aa).

Residues 1 to 22 (MRTHTRGAPSVFFIYLLCFVSA) form the signal peptide. Topologically, residues 23–902 (YITDENPEVM…APSLSASYTR (880 aa)) are lumenal. N183 carries N-linked (GlcNAc...) (complex) asparagine glycosylation. The active-site Proton donor is H205. The active site involves Y261. The N-linked (GlcNAc...) (high mannose) asparagine glycan is linked to N336. An N-linked (GlcNAc...) (complex) asparagine glycan is attached at N411. Positions 452 and 470 each coordinate Mn(2+). Residue Y473 is part of the active site. N481 is a binding site for Mn(2+). N642 carries an N-linked (GlcNAc...) (complex) asparagine glycan. Residue N648 is glycosylated (N-linked (GlcNAc...) (paucimannose) asparagine). Residues 903-923 (LFLILNIAIFFVMLAMQLTYF) form a helical membrane-spanning segment. Topologically, residues 924–933 (QRAQSLHGQR) are cytoplasmic. A helical transmembrane segment spans residues 934 to 954 (CLYAVLLIDSCILLWLYSSCS). Residues 955-958 (QSQC) lie on the Lumenal side of the membrane.

It belongs to the dermatan-sulfate isomerase family. Mn(2+) is required as a cofactor. In terms of processing, N-glycosylated. Glycosylation is important for enzymatic activity. Ubiquitously expressed with higher expression in kidney and ovary and lower expression in brain, colon and thymus. Also expressed in renal cell carcinomas, brain tumors, and in a part of melanomas and adenocarcinomas from organs other than the breast. Expressed in squamous cell carcinomas (SCC), glioma, and some adenocarcinoma cell lines, but not in breast cancer cell lines or any normal tissues (at protein level).

The protein resides in the endoplasmic reticulum membrane. It localises to the golgi apparatus membrane. Its subcellular location is the cytoplasmic vesicle membrane. It is found in the microsome membrane. The enzyme catalyses chondroitin 4'-sulfate = dermatan 4'-sulfate. The protein operates within glycan metabolism; chondroitin sulfate biosynthesis. Its pathway is glycan metabolism; heparan sulfate biosynthesis. Converts D-glucuronic acid to L-iduronic acid (IdoUA) residues. Plays an important role in the biosynthesis of the glycosaminoglycan/mucopolysaccharide dermatan sulfate. The chain is Dermatan-sulfate epimerase (DSE) from Homo sapiens (Human).